The primary structure comprises 776 residues: Ribosomal biogenesis protein LAS1L (776 aa).

Over residues 185–227 (DEDQLDAEDPEEEEREIIADDVLEEIPEPQDDDKDEELAVEDD) the composition is skewed to acidic residues. Residues 185–247 (DEDQLDAEDP…SHPEPSSRHK (63 aa)) form a disordered region. The segment covering 228–247 (ANTKGNEEVASHPEPSSRHK) has biased composition (basic and acidic residues). Phosphoserine occurs at positions 425 and 509. Positions 501-646 (KAIEGSSSSS…DYDDDEEEDR (146 aa)) are disordered. Positions 544-557 (GNLKDVKQEEKKEN) are enriched in basic and acidic residues. Composition is skewed to acidic residues over residues 558-602 (EEEE…EEEE) and 611-646 (MEAD…EEDR). Ser-658 bears the Phosphoserine mark. Positions 677–696 (SAWQVSSEDVRWGTFPLGRL) are interaction with NOL9. The interval 733–759 (SSTLSLCCGGSNTNSSSSSSSGNMEGL) is disordered. Positions 741–755 (GGSNTNSSSSSSSGN) are enriched in low complexity.

This sequence belongs to the LAS1 family. Component of some MLL1/MLL complex, at least composed of the core components KMT2A/MLL1, ASH2L, HCFC1/HCF1, WDR5 and RBBP5, as well as the facultative components BACC1, CHD8, E2F6, HSP70, INO80C, KANSL1, LAS1L, MAX, MCRS1, MGA, MYST1/MOF, PELP1, PHF20, PRP31, RING2, RUVB1/TIP49A, RUVB2/TIP49B, SENP3, TAF1, TAF4, TAF6, TAF7, TAF9 and TEX10. Component of the 5FMC complex, at least composed of PELP1, LAS1L, TEX10, WDR18 and SENP3; the complex interacts with methylated CHTOP and ZNF148. Interacts with NOL9 to form an ITS2 pre-rRNA endonuclease-kinase complex.

Its subcellular location is the nucleus. The protein localises to the nucleolus. It is found in the nucleoplasm. It localises to the cytoplasm. Functionally, required for the synthesis of the 60S ribosomal subunit and maturation of the 28S rRNA. Functions as a component of the Five Friends of Methylated CHTOP (5FMC) complex; the 5FMC complex is recruited to ZNF148 by methylated CHTOP, leading to desumoylation of ZNF148 and subsequent transactivation of ZNF148 target genes. Required for the efficient pre-rRNA processing at both ends of internal transcribed spacer 2 (ITS2). In Mus musculus (Mouse), this protein is Ribosomal biogenesis protein LAS1L (Las1l).